Consider the following 184-residue polypeptide: Large ribosomal subunit protein uL5 (184 aa).

This sequence belongs to the universal ribosomal protein uL5 family. Part of the 50S ribosomal subunit; part of the 5S rRNA/L5/L18/L25 subcomplex. Contacts the 5S rRNA and the P site tRNA. Forms a bridge to the 30S subunit in the 70S ribosome.

Functionally, this is one of the proteins that bind and probably mediate the attachment of the 5S RNA into the large ribosomal subunit, where it forms part of the central protuberance. In the 70S ribosome it contacts protein S13 of the 30S subunit (bridge B1b), connecting the 2 subunits; this bridge is implicated in subunit movement. Contacts the P site tRNA; the 5S rRNA and some of its associated proteins might help stabilize positioning of ribosome-bound tRNAs. The sequence is that of Large ribosomal subunit protein uL5 from Wolinella succinogenes (strain ATCC 29543 / DSM 1740 / CCUG 13145 / JCM 31913 / LMG 7466 / NCTC 11488 / FDC 602W) (Vibrio succinogenes).